A 70-amino-acid chain; its full sequence is Large ribosomal subunit protein eL38 (70 aa).

This sequence belongs to the eukaryotic ribosomal protein eL38 family.

This is Large ribosomal subunit protein eL38 (RpL38) from Aedes aegypti (Yellowfever mosquito).